Here is a 108-residue protein sequence, read N- to C-terminus: TYRO protein tyrosine kinase-binding protein (108 aa).

The signal sequence occupies residues 1 to 25; it reads MGRLGPSNGLLPLLLAVGGFSLVQA. Residues 26–36 lie on the Extracellular side of the membrane; sequence QRECSCSAVSP. Residues 37–57 traverse the membrane as a helical segment; that stretch reads GILAGIVLGDLVLTLLIALAV. Asp-46 serves as a coordination point for Ca(2+). Residues 58 to 108 lie on the Cytoplasmic side of the membrane; it reads YSLGRLVPRTRGAVDVTRKQHIAETESAYQELQGQRSDVYSDLNTQRQYYK. The ITAM domain maps to 75 to 103; the sequence is RKQHIAETESAYQELQGQRSDVYSDLNTQ. 2 positions are modified to phosphotyrosine: Tyr-86 and Tyr-97.

The protein belongs to the TYROBP family. In terms of assembly, homodimer; disulfide-linked. Homotrimer; disulfide-linked. Homotetramer; disulfide-linked. Homotrimers and homotetramers form when low levels of partner receptors are available and is competitive with assembly with interacting receptors. They may represent alternative oligomerization states or may be intermediates in the receptor assembly process. Binding of a metal cation aids in homooligomerization through coordination of the metal ion by the subunits of the oligomer. Interacts with TREM1. Interacts with TREM2. Interacts with CLECSF5. Interacts with CD300LB and CD300C2. Interacts with CD300E. Interacts (via ITAM domain) with SYK (via SH2 domains); activates SYK mediating neutrophils and macrophages integrin-mediated activation. Interacts with KLRC2. Interacts with CD300H. Interacts with KLRD1. Interacts with SIGLEC1. Post-translationally, following ligand binding by associated receptors, tyrosine phosphorylated in the ITAM domain which leads to activation of additional tyrosine kinases and subsequent cell activation. Highly expressed in spleen, liver and thymus. Weakly expressed in lymph nodes. Expressed in peripheral blood leukocytes, granulocytes, macrophages, and monocytes. LPS does not increase expression in granulocytes.

The protein resides in the cell membrane. Adapter protein which non-covalently associates with activating receptors found on the surface of a variety of immune cells to mediate signaling and cell activation following ligand binding by the receptors. TYROBP is tyrosine-phosphorylated in the ITAM domain following ligand binding by the associated receptors which leads to activation of additional tyrosine kinases and subsequent cell activation. Also has an inhibitory role in some cells. Non-covalently associates with activating receptors of the CD300 family to mediate cell activation. Also mediates cell activation through association with activating receptors of the CD200R family. Required for neutrophil activation mediated by integrin. Required for the activation of myeloid cells mediated by the CLEC5A/MDL1 receptor. Associates with natural killer (NK) cell receptors such as the KLRD1/KLRC2 heterodimer to mediate NK cell activation. Associates with TREM1 to mediate activation of neutrophils and monocytes. Associates with TREM2 on monocyte-derived dendritic cells to mediate up-regulation of chemokine receptor CCR7 and dendritic cell maturation and survival. Association with TREM2 mediates cytokine-induced formation of multinucleated giant cells which are formed by the fusion of macrophages. Stabilizes the TREM2 C-terminal fragment (TREM2-CTF) produced by TREM2 ectodomain shedding which suppresses the release of pro-inflammatory cytokines. In microglia, required with TREM2 for phagocytosis of apoptotic neurons. Required with ITGAM/CD11B in microglia to control production of microglial superoxide ions which promote the neuronal apoptosis that occurs during brain development. Promotes pro-inflammatory responses in microglia following nerve injury which accelerates degeneration of injured neurons. Positively regulates the expression of the IRAK3/IRAK-M kinase and IL10 production by liver dendritic cells and inhibits their T cell allosimulatory ability. Negatively regulates B cell proliferation. Required for CSF1-mediated osteoclast cytoskeletal organization. Positively regulates multinucleation during osteoclast development. The sequence is that of TYRO protein tyrosine kinase-binding protein from Sus scrofa (Pig).